We begin with the raw amino-acid sequence, 67 residues long: Type 3 secretion system chaperone PscE (67 aa).

Residues 16-37 (HAAALRQRLQAALAECRRELAR) are a coiled coil.

Belongs to the YscE family. Forms a stable ternary complex with PscF/SctF and PscG within the cytoplasm. Co-stabilized by PscG.

The protein localises to the cytoplasm. Functionally, chaperone of the type III secretion system (T3SS), also called injectisome, which is used to inject bacterial effector proteins into eukaryotic host cells, facilitating the establishment and dissemination of infection. Along with PscG, prevents premature polymerization of the PscF/SctF needle protein within the cytoplasm. Required for type III secretion needle assembly. Also required for cytotoxicity by influencing PscF/SctF levels. The protein is Type 3 secretion system chaperone PscE (pscE) of Pseudomonas aeruginosa (strain ATCC 15692 / DSM 22644 / CIP 104116 / JCM 14847 / LMG 12228 / 1C / PRS 101 / PAO1).